We begin with the raw amino-acid sequence, 247 residues long: Anamorsin homolog (247 aa).

Residues 4 to 128 are N-terminal SAM-like domain; sequence FKGLQKSLYI…ETGSSARLSF (125 aa). Residues 129–160 are linker; it reads AKKNASALNVWKISGDDEELIDEEDLLDEEDK. Positions 171, 180, 183, and 185 each coordinate [2Fe-2S] cluster. The interval 171-185 is fe-S binding site A; sequence CSTTGKRKACKNCSC. Cys-208, Cys-211, Cys-219, and Cys-222 together coordinate [4Fe-4S] cluster. 2 short sequence motifs (cx2C motif) span residues 208-211 and 219-222; these read CGNC and CSTC. Positions 208 to 222 are fe-S binding site B; that stretch reads CGNCYLGDAFRCSTC.

This sequence belongs to the anamorsin family. In terms of assembly, monomer. Requires [2Fe-2S] cluster as cofactor. It depends on [4Fe-4S] cluster as a cofactor.

Its subcellular location is the cytoplasm. The protein resides in the mitochondrion intermembrane space. Its function is as follows. Component of the cytosolic iron-sulfur (Fe-S) protein assembly (CIA) machinery. Required for the maturation of extramitochondrial Fe-S proteins. Part of an electron transfer chain functioning in an early step of cytosolic Fe-S biogenesis, facilitating the de novo assembly of a [4Fe-4S] cluster on the cytosolic Fe-S scaffold complex. Electrons are transferred from NADPH via a FAD- and FMN-containing diflavin oxidoreductase. Together with the diflavin oxidoreductase, also required for the assembly of the diferric tyrosyl radical cofactor of ribonucleotide reductase (RNR), probably by providing electrons for reduction during radical cofactor maturation in the catalytic small subunit. The chain is Anamorsin homolog from Drosophila persimilis (Fruit fly).